The primary structure comprises 235 residues: High affinity immunoglobulin epsilon receptor subunit beta (235 aa).

Positions 1-23 (MDTENRSRADLALPNPQESSSAP) are disordered. At 1 to 51 (MDTENRSRADLALPNPQESSSAPDIELLEASPAKAAPPKQTWRTFLKKELE) the chain is on the cytoplasmic side. A helical membrane pass occupies residues 52 to 71 (FLGATQILVGLICLCFGTIV). The Extracellular segment spans residues 72–89 (CSVLYVSDFDEEVLLLYK). Residues 90–109 (LGYPFWGAVLFVLSGFLSII) form a helical membrane-spanning segment. The Cytoplasmic segment spans residues 110–122 (SERKNTLYLVRGS). Residues 123–142 (LGANIVSSIAAGTGIAMLIL) form a helical membrane-spanning segment. The Extracellular segment spans residues 143–171 (NLTNNFAYMNNCKNVTEDDGCFVASFTTE). The helical transmembrane segment at 172–191 (LVLMMLFLTILAFCSAVLFT) threads the bilayer. The Cytoplasmic segment spans residues 192 to 235 (IYRIGQELESKKVPDDRLYEELNVYSPIYSELEDKGETSSPVDS). A phosphotyrosine mark is found at tyrosine 210 and tyrosine 216. Serine 217 carries the post-translational modification Phosphoserine. A Phosphotyrosine modification is found at tyrosine 220.

This sequence belongs to the MS4A family. In terms of assembly, tetramer of an alpha chain, a beta chain, and two disulfide linked gamma chains. Binds LILRB1. Interacts with FGR. Interacts with FGR and FES/FPS. Interacts with LYN. Phosphorylated on tyrosine residues by LYN.

It localises to the membrane. Functionally, high affinity receptor that binds to the Fc region of immunoglobulins epsilon. Aggregation of FCER1 by multivalent antigens is required for the full mast cell response, including the release of preformed mediators (such as histamine) by degranulation and de novo production of lipid mediators and cytokines. Also mediates the secretion of important lymphokines. Binding of allergen to receptor-bound IgE leads to cell activation and the release of mediators responsible for the manifestations of allergy. The chain is High affinity immunoglobulin epsilon receptor subunit beta (Ms4a2) from Mus musculus (Mouse).